The chain runs to 722 residues: Serine/threonine-protein kinase dkf-1 (722 aa).

Phorbol-ester/DAG-type zinc fingers lie at residues proline 98 to cysteine 148 and proline 186 to cysteine 236. A PH domain is found at lysine 279–proline 407. In terms of domain architecture, Protein kinase spans valine 426–leucine 685. ATP-binding positions include leucine 432–valine 440 and lysine 455. The active-site Proton acceptor is the aspartate 551. Threonine 588 is subject to Phosphothreonine.

The protein belongs to the protein kinase superfamily. CAMK Ser/Thr protein kinase family. PKD subfamily. Requires Mg(2+) as cofactor. In terms of processing, prolonged phosphorylation at Thr-588 results in ubiquitination and degradation. In terms of tissue distribution, highly expressed in embryos and at lower levels through the four larval stages in adults. Present in a region bounded by the anterior and posterior bulbs of the pharynx and an area of the tail containing the lumbar, dorsorectal and pre-anal ganglia. Expressed in neurons.

The protein resides in the cytoplasm. It is found in the membrane. The enzyme catalyses L-seryl-[protein] + ATP = O-phospho-L-seryl-[protein] + ADP + H(+). It carries out the reaction L-threonyl-[protein] + ATP = O-phospho-L-threonyl-[protein] + ADP + H(+). Its activity is regulated as follows. Activated by DAG and phorbol esters. Phorbol-ester/DAG-type domain 1 binds phorbol ester with high affinity and mediates accumulation at the cell periphery. Phorbol-ester/DAG-type domain 2 binds phorbol ester with low affinity but may mediate initial contact, resulting in a conformational change allowing previously occluded domain 1 to anchor the kinase. Phosphorylation on Thr-588 is then also required for activation and may also result in a further conformational change. Converts transient diacylglycerol (DAG) signals into prolonged physiological effects, independently of PKC. Role in the regulation of growth and neuromuscular control of movement. Involved in immune response to S.aureus bacterium by activating transcription factor hlh-30 downstream of phospholipase plc-1. This Caenorhabditis elegans protein is Serine/threonine-protein kinase dkf-1 (dkf-1).